The primary structure comprises 226 residues: Thioredoxin domain-containing protein 9 (226 aa).

The 106-residue stretch at 75–180 folds into the Thioredoxin domain; that stretch reads EIGSERDFFQ…TTETLEWRLG (106 aa). Ser188, Ser221, and Ser223 each carry phosphoserine.

As to quaternary structure, forms ternary complexes with the chaperonin TCP1 complex, spanning the cylindrical chaperonin cavity and contacting at least 2 subunits. Expressed in testis, liver, heart, kidney, brain, spleen and lung.

The protein resides in the cytoplasm. It localises to the nucleus. Its subcellular location is the cytoskeleton. It is found in the microtubule organizing center. The protein localises to the centrosome. The protein resides in the midbody. Significantly diminishes the chaperonin TCP1 complex ATPase activity, thus negatively impacts protein folding, including that of actin or tubulin. In Mus musculus (Mouse), this protein is Thioredoxin domain-containing protein 9 (Txndc9).